The chain runs to 127 residues: Mitochondrial pyruvate carrier 2 (127 aa).

The Mitochondrial matrix portion of the chain corresponds to 2 to 40 (AAAGARGLRATYHRLMDKVELLLPKKLRPLYNHPAGPRT). Lys26 carries the post-translational modification N6-acetyllysine. Residues 41-61 (VFFWAPIMKWGLVCAGLADMA) traverse the membrane as a helical segment. Topologically, residues 62–72 (RPAEKLSTAQS) are mitochondrial intermembrane. Residues 73 to 90 (TVLMATGFIWSRYSLVII) form a helical membrane-spanning segment. The Mitochondrial matrix portion of the chain corresponds to 91-92 (PK). A helical transmembrane segment spans residues 93-115 (NWSLFAVNFFVGSAGASQLFRIW). Residues 116 to 127 (RYNQELKSKGIQ) lie on the Mitochondrial intermembrane side of the membrane.

It belongs to the mitochondrial pyruvate carrier (MPC) (TC 2.A.105) family. Homodimer. Homooligomer. Forms heterodimers with MPC1 and MPC1L. The heterodimer is the more stable and dominant form.

The protein localises to the mitochondrion inner membrane. The catalysed reaction is pyruvate(out) + H(+)(out) = pyruvate(in) + H(+)(in). Mediates the uptake of pyruvate into mitochondria. The sequence is that of Mitochondrial pyruvate carrier 2 (Mpc2) from Mus musculus (Mouse).